Here is a 224-residue protein sequence, read N- to C-terminus: Myogenin (224 aa).

Residues serine 77 and serine 79 each carry the phosphoserine; by CaMK2G modification. Residues 81–132 (DRRRAATLREKRRLKKVNEAFEALKRSTLLNPNQRLPKVEILRSAIQYIERL) enclose the bHLH domain. Position 87 is a phosphothreonine; by CaMK2G (threonine 87).

Homodimer and heterodimer with E12; heterodimerization enhances MYOG DNA-binding and transcriptional activities. Interacts with SMARCA4/BRG1/BAF190A. Interacts (via C-terminal region) with SSRP1 and SUPT16H; the interaction is indicative of an interaction with the FACT complex. Interacts with CSRP3. In terms of processing, phosphorylated by CAMK2G on threonine and serine amino acids in a muscle activity-dependent manner. Phosphorylation of Thr-87 impairs both DNA-binding and trans-activation functions in contracting muscles.

The protein localises to the nucleus. Acts as a transcriptional activator that promotes transcription of muscle-specific target genes and plays a role in muscle differentiation, cell cycle exit and muscle atrophy. Essential for the development of functional embryonic skeletal fiber muscle differentiation. However is dispensable for postnatal skeletal muscle growth; phosphorylation by CAMK2G inhibits its transcriptional activity in respons to muscle activity. Required for the recruitment of the FACT complex to muscle-specific promoter regions, thus promoting gene expression initiation. During terminal myoblast differentiation, plays a role as a strong activator of transcription at loci with an open chromatin structure previously initiated by MYOD1. Together with MYF5 and MYOD1, co-occupies muscle-specific gene promoter core regions during myogenesis. Also cooperates with myocyte-specific enhancer factor MEF2D and BRG1-dependent recruitment of SWI/SNF chromatin-remodeling enzymes to alter chromatin structure at myogenic late gene promoters. Facilitates cell cycle exit during terminal muscle differentiation through the up-regulation of miR-20a expression, which in turn represses genes involved in cell cycle progression. Binds to the E-box containing (E1) promoter region of the miR-20a gene. Also plays a role in preventing reversal of muscle cell differentiation. Contributes to the atrophy-related gene expression in adult denervated muscles. Induces fibroblasts to differentiate into myoblasts. The polypeptide is Myogenin (MYOG) (Bos taurus (Bovine)).